The sequence spans 2892 residues: Inositol 1,4,5-trisphosphate receptor itr-1 (2892 aa).

The Cytoplasmic segment spans residues 1-2475; the sequence is MNPSYGRVRK…YPLPEHSNSS (2475 aa). 4 MIR domains span residues 192 to 246, 319 to 379, 386 to 466, and 490 to 551; these read GNVI…IEPA, QNSV…VQVV, GGTA…LGPT, and NKEV…LLPV. 357 to 361 provides a ligand contact to 1D-myo-inositol 1,4,5-trisphosphate; that stretch reads RMTNR. Residues 625-628 and 689-691 each bind 1D-myo-inositol 1,4,5-trisphosphate; these read KLLR and YRK. The interval 1030 to 1056 is disordered; that stretch reads MMRGGNKENSKDLAKTPSVTAEEAGRT. The segment covering 1034–1043 has biased composition (basic and acidic residues); it reads GNKENSKDLA. Residues 2476 to 2496 traverse the membrane as a helical segment; that stretch reads ISLGNLYSWFAVFSSFLLAHY. Topologically, residues 2497–2514 are extracellular; the sequence is LRHDKIYLHKTSLLILAS. A helical transmembrane segment spans residues 2515–2535; the sequence is LCFLLLSSIGVTLTLYIFGIL. Topologically, residues 2536–2572 are cytoplasmic; the sequence is QLVNKIVHVVAFVSNKGLEDRPIAEILACRNLHYLLV. A helical transmembrane segment spans residues 2573–2593; it reads YLFICILGLLVHPMIYCILLF. The Extracellular portion of the chain corresponds to 2594 to 2615; that stretch reads DIIFTEETLQNVIASVTRNYQS. A helical transmembrane segment spans residues 2616–2636; sequence IVWTGLLALILLYFFSILGFL. Residues 2637-2735 are Cytoplasmic-facing; it reads YFRHDFYLEV…FIWRVAYDMT (99 aa). Residues 2655–2666 are compositionally biased toward polar residues; that stretch reads ATISSGIPSETC. Positions 2655–2685 are disordered; the sequence is ATISSGIPSETCPSEGCPGLQPSEKDDNDDE. Residues 2736-2756 traverse the membrane as a helical segment; that stretch reads FFVVLIVIVLNLIFGVIIDTF. Residues 2757-2892 are Extracellular-facing; sequence GDLRAEKNEK…RAFMEQFQPR (136 aa).

This sequence belongs to the InsP3 receptor family. Interacts with myo-1, myo-2, unc-54/myo-4 and nmy-2. Also interacts with iri-1. As to expression, isoform a is expressed in the anterior cells of the pharyngeal terminal bulb, vulva, rectal epithelial cells, spicule protractor muscles of the proctodeum and male-specific neuron CP8 or CP9. Isoform d is expressed in the spermatheca, excretory cell, amphid socket cells, PDA motor neuron, spicule retractor muscles, gubernaculum retractor muscles, posterior oblique muscles, diagonal muscles and the vas deferens. Also expressed in the intestine, pharynx, pharyngeal isthmus, pharyngeal intestinal valve, somatic gonad, hypodermal cells of the vulva, uterine sheath cells, tail, head, LUA motor neuron and the embryonic epidermis (at protein level).

The protein localises to the endoplasmic reticulum membrane. In terms of biological role, receptor for inositol 1,4,5-trisphosphate, a second messenger that regulates intracellular calcium homeostasis. Binds in vitro to both inositol 1,4,5-trisphosphate (1,4,5-InsP3) and inositol 2,4,5-trisphosphate (2,4,5-InsP3) with high affinity and does not discriminate between the phosphate at 1 or 2 position. Can also bind inositol 1,3,4,5-tetrakisphosphate (1,3,4,5-InsP4) and inositol 4,5-bisphosphate (4,5-InsP2), but with lower affinity. Acts as a timekeeper/rhythm generator via calcium signaling, affecting the defecation cycle and pharyngeal pumping. Affects normal hermaphrodite and male fertility as a participant in intracellular signaling by acting downstream of let-23/lin-3 which regulates ovulation, spermathecal valve dilation and male mating behavior. Important for early embryonic development; controls epidermal cell migration and may also regulate filopodial protrusive activity during epithelial morphogenesis. Component of inositol trisphosphate (IP3)-mediated downstream signaling pathways that controls amphid sensory neuronal (ASH)-mediated response to nose touch and benzaldehyde but not other ASH-mediated responses. Involved in modulating lifespan, acting downstream of transcription factor atf-6. The protein is Inositol 1,4,5-trisphosphate receptor itr-1 of Caenorhabditis elegans.